Here is an 89-residue protein sequence, read N- to C-terminus: Small ribosomal subunit protein uS14A (89 aa).

The protein belongs to the universal ribosomal protein uS14 family. As to quaternary structure, part of the 30S ribosomal subunit. Contacts proteins S3 and S10.

Binds 16S rRNA, required for the assembly of 30S particles and may also be responsible for determining the conformation of the 16S rRNA at the A site. This chain is Small ribosomal subunit protein uS14A, found in Lactiplantibacillus plantarum (strain ATCC BAA-793 / NCIMB 8826 / WCFS1) (Lactobacillus plantarum).